A 453-amino-acid chain; its full sequence is MEDYLQGCRAALQESRPLHVVLGNEACDLDSTVSALALAFYLAKTTEAEEVFVPVLNIKRSELPLRGDIVFFLQKVHIPESILIFRDEIDLHALYQAGQLTLILVDHHILSKSDTALEEAVAEVLDHRPIEPKHCPPCHVSVELVGSCATLVTERILQGAPEILDRQTAALLHGTIILDCVNMDLKIGKATPKDSKYVEKLEALFPDLPKRNDIFDSLQKAKFDVSGLTTEQMLRKDQKTIYRQGVKVAISAIYMDLEAFLQRSNLLADLHAFCQAHSYDVLVAMTIFFNTHNEPVRQLAIFCPHVALQTTICEVLERSHSPPLKLTPASSTHPNLHAYLQGNTQVSRKKLLPLLQEALSAYFDSMKIPSGQPETADVSREQVDKELDRASNSLISGLSQDEEDPPLPPTPMNSLVDECPLDQGLPKLSAEAVFEKCSQISLSQSTTASLSKK.

Position 1 is an N-acetylmethionine (M1). The Mn(2+) site is built by D28, D30, D106, and D179. The DHH motif motif lies at 106-108 (DHH). The essential for homodimerization stretch occupies residues 393-420 (SLISGLSQDEEDPPLPPTPMNSLVDECP). Residues 395-421 (ISGLSQDEEDPPLPPTPMNSLVDECPL) are disordered. S399 bears the Phosphoserine mark. Position 410 is a phosphothreonine (T410). At S414 the chain carries Phosphoserine.

This sequence belongs to the PPase class C family. Prune subfamily. As to quaternary structure, homooligomer. Able to homodimerize via its C-terminal domain. Interacts with NME1. Interacts with GSK3; at focal adhesion complexes where paxillin and vinculin are colocalized. Interacts with alpha and beta tubulin. It depends on Mn(2+) as a cofactor. In terms of tissue distribution, ubiquitously expressed. Seems to be overexpressed in aggressive sarcoma subtypes, such as leiomyosarcomas and malignant fibrous histiocytomas (MFH) as well as in the less malignant liposarcomas.

Its subcellular location is the cytoplasm. The protein resides in the nucleus. It localises to the cell junction. It is found in the focal adhesion. The catalysed reaction is diphosphate + H2O = 2 phosphate + H(+). With respect to regulation, activated by magnesium ions and inhibited by manganese ions. Inhibited by dipyridamole, moderately sensitive to IBMX and inhibited by vinpocetine. Functionally, phosphodiesterase (PDE) that has higher activity toward cAMP than cGMP, as substrate. Plays a role in cell proliferation, migration and differentiation, and acts as a negative regulator of NME1. Plays a role in the regulation of neurogenesis. Involved in the regulation of microtubule polymerization. In Homo sapiens (Human), this protein is Exopolyphosphatase PRUNE1.